Reading from the N-terminus, the 431-residue chain is 5-methylthioadenosine/S-adenosylhomocysteine deaminase (431 aa).

His-66 and His-68 together coordinate Zn(2+). Glu-95, Arg-147, and His-185 together coordinate substrate. His-212 serves as a coordination point for Zn(2+). Substrate is bound by residues Glu-215 and Asp-300. A Zn(2+)-binding site is contributed by Asp-300.

The protein belongs to the metallo-dependent hydrolases superfamily. MTA/SAH deaminase family. It depends on Zn(2+) as a cofactor.

The catalysed reaction is S-adenosyl-L-homocysteine + H2O + H(+) = S-inosyl-L-homocysteine + NH4(+). It catalyses the reaction S-methyl-5'-thioadenosine + H2O + H(+) = S-methyl-5'-thioinosine + NH4(+). Its function is as follows. Catalyzes the deamination of 5-methylthioadenosine and S-adenosyl-L-homocysteine into 5-methylthioinosine and S-inosyl-L-homocysteine, respectively. Is also able to deaminate adenosine. In Desulfitobacterium hafniense (strain Y51), this protein is 5-methylthioadenosine/S-adenosylhomocysteine deaminase.